A 373-amino-acid polypeptide reads, in one-letter code: uncharacterized protein (373 aa).

The protein belongs to the glycosyltransferase 28 family.

This is an uncharacterized protein from Bacillus subtilis (strain 168).